Here is a 448-residue protein sequence, read N- to C-terminus: Probable glycine dehydrogenase (decarboxylating) subunit 1 (448 aa).

Belongs to the GcvP family. N-terminal subunit subfamily. In terms of assembly, the glycine cleavage system is composed of four proteins: P, T, L and H. In this organism, the P 'protein' is a heterodimer of two subunits.

It catalyses the reaction N(6)-[(R)-lipoyl]-L-lysyl-[glycine-cleavage complex H protein] + glycine + H(+) = N(6)-[(R)-S(8)-aminomethyldihydrolipoyl]-L-lysyl-[glycine-cleavage complex H protein] + CO2. In terms of biological role, the glycine cleavage system catalyzes the degradation of glycine. The P protein binds the alpha-amino group of glycine through its pyridoxal phosphate cofactor; CO(2) is released and the remaining methylamine moiety is then transferred to the lipoamide cofactor of the H protein. The chain is Probable glycine dehydrogenase (decarboxylating) subunit 1 from Geobacillus thermodenitrificans (strain NG80-2).